The primary structure comprises 309 residues: tRNA hydroxylation protein P2 (309 aa).

Belongs to the peptidase U32 family.

In terms of biological role, involved in prephenate-dependent formation of 5-hydroxyuridine (ho5U) modification at position 34 in tRNAs, the first step in 5-methoxyuridine (mo5U) biosynthesis. This Bacillus subtilis (strain 168) protein is tRNA hydroxylation protein P2.